A 352-amino-acid polypeptide reads, in one-letter code: Protein NDRG4 (352 aa).

Serine 298, serine 317, and serine 323 each carry phosphoserine. The segment covering 314 to 323 has biased composition (low complexity); sequence RTASLTSASS. Residues 314-352 are disordered; that stretch reads RTASLTSASSVDGSRPQACTHSESSEGLGQVNHTMEVSC. A compositionally biased stretch (polar residues) spans 330 to 352; it reads QACTHSESSEGLGQVNHTMEVSC.

It belongs to the NDRG family. Phosphorylated in an aortic smooth muscle cell line, following PDGF treatment. As to expression, expressed predominantly in brain and heart (at protein level). In the brain, detected in astrocytes. Isoform 1 and isoform 2 are only expressed in brain. Isoform 3 is expressed in both heart and brain. Up-regulated in glioblastoma multiforme cells.

It localises to the cytoplasm. The protein resides in the cytosol. In terms of biological role, contributes to the maintenance of intracerebral BDNF levels within the normal range, which is necessary for the preservation of spatial learning and the resistance to neuronal cell death caused by ischemic stress. May enhance growth factor-induced ERK1 and ERK2 phosphorylation, including that induced by PDGF and FGF. May attenuate NGF-promoted ELK1 phosphorylation in a microtubule-dependent manner. In Homo sapiens (Human), this protein is Protein NDRG4 (NDRG4).